A 203-amino-acid chain; its full sequence is Large ribosomal subunit protein uL18 (203 aa).

The protein belongs to the universal ribosomal protein uL18 family. Part of the 50S ribosomal subunit. Contacts the 5S and 23S rRNAs.

Its function is as follows. This is one of the proteins that bind and probably mediate the attachment of the 5S RNA into the large ribosomal subunit, where it forms part of the central protuberance. In Pyrococcus horikoshii (strain ATCC 700860 / DSM 12428 / JCM 9974 / NBRC 100139 / OT-3), this protein is Large ribosomal subunit protein uL18.